The following is a 71-amino-acid chain: Large ribosomal subunit protein uL29 (71 aa).

Belongs to the universal ribosomal protein uL29 family.

The chain is Large ribosomal subunit protein uL29 from Rickettsia africae (strain ESF-5).